Here is a 276-residue protein sequence, read N- to C-terminus: MSEMQMDCALDLMRRLPPQQIEKNLIDLIDLAPDLCEDLLSSVDQPLKIAKDKEHGKDYLLCDYNRDGDSYRSPWSNSYYPPLEDGQMPSERLRKLEIEANYAFDQYREMYYEGGVSSVYLWDLDHGFAAVILIKKAGDGSKMIRGCWDSIHVVEVQEKTTGRTAHYKLTSTAMLWLQTNKQGSGTMNLGGSLTRQQEQDANVSESSPHIANIGKMVEEMENKIRNTLNEIYFGKTKDIVNGLRSTQSLADQRQQAAMKQDLAAAILRRNVKPESN.

Belongs to the F-actin-capping protein beta subunit family. Component of the F-actin capping complex, composed of a heterodimer of an alpha and a beta subunit. Subunit of dynactin, a multiprotein complex part of a tripartite complex with dynein and a adapter, such as BICDL1, BICD2 or HOOK3.

Its subcellular location is the cytoplasm. It is found in the cytoskeleton. F-actin-capping proteins bind in a Ca(2+)-independent manner to the fast growing ends of actin filaments (barbed end) thereby blocking the exchange of subunits at these ends. Unlike other capping proteins (such as gelsolin and severin), these proteins do not sever actin filaments. Forms, with CAPZB, the barbed end of the fast growing ends of actin filaments in the dynactin complex and stabilizes dynactin structure. The dynactin multiprotein complex activates the molecular motor dynein for ultra-processive transport along microtubules. The protein is F-actin-capping protein subunit beta (cpb) of Drosophila melanogaster (Fruit fly).